The chain runs to 494 residues: Tripartite motif-containing protein 5 (494 aa).

Alanine 2 is modified (N-acetylalanine). Residues 15-59 form an RING-type zinc finger; that stretch reads CPICLELLTQPLSLDCGHSFCQACLTANHKTSMPDEGERSCPVCR. Serine 86 carries the phosphoserine modification. The B box-type zinc finger occupies 91–133; it reads QKVDHCARHGEKLLLFCQEDRKVICWLCERSQEHRGHHTFLTE. The Zn(2+) site is built by cysteine 96, histidine 99, cysteine 118, and histidine 124. Residues 132-241 adopt a coiled-coil conformation; sequence TEEVAQEYQV…LISDLEHRLQ (110 aa). Residues 186 to 199 are required for interaction with GABARAP and for autophagy; the sequence is FEQLRHILDWVESN. Residues 282-494 enclose the B30.2/SPRY domain; sequence LKVMLEVLRE…VPMTLCSPSS (213 aa).

The protein belongs to the TRIM/RBCC family. Can form homodimers and homotrimers. In addition to lower-order dimerization, also exhibits a higher-order multimerization and both low- and high-order multimerizations are essential for its restriction activity. Interacts with BTBD1 and BTBD2. Interacts with PSMC4, PSMC5, PSMD7 and HSPA8/HSC70. Interacts (via B30.2/SPRY domain) with HSPA1A/B. Interacts with PSMC2, MAP3K7/TAK1, TAB2 and TAB3. Interacts with SQSTM1. Interacts with TRIM6 and TRIM34. Interacts with ULK1 (phosphorylated form), GABARAP, GABARAPL1, GABARAPL2, MAP1LC3A, MAP1LC3C and BECN1. In terms of processing, degraded in a proteasome-independent fashion in the absence of viral infection but in a proteasome-dependent fashion following exposure to restriction sensitive virus. Post-translationally, autoubiquitinated in a RING finger- and UBE2D2-dependent manner. Monoubiquitinated by TRIM21. Deubiquitinated by Yersinia YopJ. Ubiquitination may not lead to proteasomal degradation.

The protein resides in the cytoplasm. The protein localises to the nucleus. The catalysed reaction is S-ubiquitinyl-[E2 ubiquitin-conjugating enzyme]-L-cysteine + [acceptor protein]-L-lysine = [E2 ubiquitin-conjugating enzyme]-L-cysteine + N(6)-ubiquitinyl-[acceptor protein]-L-lysine.. The protein operates within protein modification; protein ubiquitination. In terms of biological role, capsid-specific restriction factor that prevents infection from non-host-adapted retroviruses. Blocks viral replication early in the life cycle, after viral entry but before reverse transcription. In addition to acting as a capsid-specific restriction factor, also acts as a pattern recognition receptor that activates innate immune signaling in response to the retroviral capsid lattice. Binding to the viral capsid triggers its E3 ubiquitin ligase activity, and in concert with the heterodimeric ubiquitin conjugating enzyme complex UBE2V1-UBE2N (also known as UBC13-UEV1A complex) generates 'Lys-63'-linked polyubiquitin chains, which in turn are catalysts in the autophosphorylation of the MAP3K7/TAK1 complex (includes TAK1, TAB2, and TAB3). Activation of the MAP3K7/TAK1 complex by autophosphorylation results in the induction and expression of NF-kappa-B and MAPK-responsive inflammatory genes, thereby leading to an innate immune response in the infected cell. Plays a role in regulating autophagy through activation of autophagy regulator BECN1 by causing its dissociation from its inhibitors BCL2 and TAB2. This Symphalangus syndactylus (Siamang) protein is Tripartite motif-containing protein 5 (TRIM5).